We begin with the raw amino-acid sequence, 1436 residues long: Probable ATP-dependent RNA helicase spindle-E (1436 aa).

Residues 124–291 (LAAINANPVV…FTTTNSIPPV (168 aa)) enclose the Helicase ATP-binding domain. ATP is bound at residue 137 to 144 (GETGCGKT). A DEAH box motif is present at residues 237–240 (DEVH). The Helicase C-terminal domain maps to 337–524 (KIIMVIDNME…NSVLRAKELE (188 aa)). Positions 940 to 1003 (ACDISKGMMV…RFMSEELIQQ (64 aa)) constitute a Tudor domain.

The protein belongs to the DEAD box helicase family. DEAH subfamily.

The protein localises to the cytoplasm. It catalyses the reaction ATP + H2O = ADP + phosphate + H(+). In terms of biological role, probable ATP-binding RNA helicase which plays a central role during spermatogenesis and oogenesis by repressing transposable elements and preventing their mobilization, which is essential for the germline integrity. Acts via the piRNA metabolic process, which mediates the repression of transposable elements during meiosis by forming complexes composed of piRNAs and Piwi and govern the methylation and subsequent repression of transposons. Involved in the repression of LTR retrotransposon copia. Also involved in telomere regulation by repressing specialized telomeric retroelements HeT-A, TAHRE, and TART; Drosophila telomeres being maintained by transposition of specialized telomeric retroelements. Involved in telomeric trans-silencing, a repression mechanism by which a transposon or a transgene inserted in subtelomeric heterochromatin has the capacity to repress in trans in the female germline, a homologous transposon, or transgene located in euchromatin. Involved in the repression of testis-expressed Stellate genes by the homologous Su(Ste) repeats. Required for anteroposterior and dorsoventral axis formation during oogenesis. The sequence is that of Probable ATP-dependent RNA helicase spindle-E (spn-E) from Drosophila yakuba (Fruit fly).